The chain runs to 686 residues: Delta-like protein 4 (686 aa).

An N-terminal signal peptide occupies residues 1–27 (MTPGSRSACRWALLLLAVLWPQQRAAG). Residues 28 to 530 (SGIFQLRLQE…PVGLPPSFPW (503 aa)) are Extracellular-facing. 2 disulfides stabilise this stretch: cysteine 51–cysteine 55 and cysteine 62–cysteine 75. Asparagine 79, asparagine 109, and asparagine 162 each carry an N-linked (GlcNAc...) asparagine glycan. Residues 174–218 (VVCSDNYYGDSCSRLCKKRDDHFGHYECQPDGSLSCLPGWTGKYC) form the DSL domain. Cysteine 176 and cysteine 185 are disulfide-bonded. Interaction with Notch1 regions lie at residues 186–188 (SRL) and 192–196 (RDDHF). 26 cysteine pairs are disulfide-bonded: cysteine 189–cysteine 201, cysteine 209–cysteine 218, cysteine 223–cysteine 234, cysteine 227–cysteine 240, cysteine 242–cysteine 251, cysteine 254–cysteine 265, cysteine 260–cysteine 271, cysteine 273–cysteine 282, cysteine 289–cysteine 301, cysteine 295–cysteine 311, cysteine 313–cysteine 322, cysteine 329–cysteine 340, cysteine 334–cysteine 349, cysteine 351–cysteine 360, cysteine 367–cysteine 378, cysteine 372–cysteine 389, cysteine 391–cysteine 400, cysteine 407–cysteine 418, cysteine 412–cysteine 427, cysteine 429–cysteine 438, cysteine 445–cysteine 456, cysteine 450–cysteine 465, cysteine 467–cysteine 476, cysteine 485–cysteine 496, cysteine 490–cysteine 507, and cysteine 509–cysteine 518. EGF-like domains follow at residues 219-252 (DQPICLSGCHEQNGYCSKPDECNCRPGWQGPLCN), 256-283 (PHNGCRHGTCTIPWQCACDEGWGGLFCD), 285-323 (DLNYCTHHSPCKNGSTCSNSGPRGYTCTCLPGYTGEHCE), 325-361 (ELSKCASNPCRNGGSCKDHENSYHCLCPPGYYGQHCE), 363-401 (STLTCADSPCFNGGSCRERNQGASYACECPPNFTGSNCE), 403-439 (KVDRCTSNPCANGGQCLNRGPSRTCRCRPGFTGTHCE), 441-477 (HISDCARSPCAHGGTCHDLENGPVCTCPAGFSGRRCE), and 481-519 (TNDACASGPCFNGATCYTGLSPNNFVCNCPYGFVGSRCE). Residues 531 to 551 (VAVSLGVGLVVLLVLLVMVAV) traverse the membrane as a helical segment. Topologically, residues 552–686 (AVRQLRLRRP…RNECVIATEV (135 aa)) are cytoplasmic.

As to quaternary structure, interacts with NOTCH4. Interacts (via N-terminal DSL and MNNL domains) with NOTCH1 (via EGF-like domains).

Its subcellular location is the cell membrane. Functionally, involved in the Notch signaling pathway as Notch ligand. Activates NOTCH1 and NOTCH4. Involved in angiogenesis; negatively regulates endothelial cell proliferation and migration and angiogenic sprouting. Essential for retinal progenitor proliferation. Required for suppressing rod fates in late retinal progenitors as well as for proper generation of other retinal cell types. During spinal cord neurogenesis, inhibits V2a interneuron fate. The protein is Delta-like protein 4 of Rattus norvegicus (Rat).